A 300-amino-acid chain; its full sequence is Ubiquitin thioesterase otu2 (300 aa).

Disordered regions lie at residues 23 to 73 (RKQL…QQED) and 89 to 141 (TAEK…SEKM). A compositionally biased stretch (basic and acidic residues) spans 48 to 61 (LSQKHATERQKLDK). The segment covering 62–71 (GDEETNETQQ) has biased composition (acidic residues). Positions 89-109 (TAEKSSVQSSLNTKENTPQQP) are enriched in polar residues. Positions 115–141 (RQKERLERRKAEMKKMSEQAELESEKM) are enriched in basic and acidic residues. The OTU domain maps to 161 to 298 (LVAVDIPADG…GAHYNSLLYR (138 aa)).

It localises to the cytoplasm. The enzyme catalyses Thiol-dependent hydrolysis of ester, thioester, amide, peptide and isopeptide bonds formed by the C-terminal Gly of ubiquitin (a 76-residue protein attached to proteins as an intracellular targeting signal).. Functionally, hydrolase that can remove conjugated ubiquitin from proteins and may therefore play an important regulatory role at the level of protein turnover by preventing degradation. This Schizosaccharomyces pombe (strain 972 / ATCC 24843) (Fission yeast) protein is Ubiquitin thioesterase otu2 (otu2).